We begin with the raw amino-acid sequence, 376 residues long: Pulmonary surfactant-associated protein B (376 aa).

An N-terminal signal peptide occupies residues 1-24; it reads MAKLHLQWLLLLPTLCSLGAATES. Residues 25–63 enclose the Saposin A-type domain; sequence ASSPDCAQGPKFWCQSLEQAIQCRALGHCLQEVWGHAGA. A propeptide spanning residues 25–190 is cleaved from the precursor; that stretch reads ASSPDCAQGP…PHTQDLSEQQ (166 aa). 3 Saposin B-type domains span residues 63–145, 194–271, and 290–365; these read ANDL…PLGQ, PLPF…STAD, and QDTE…EAPA. 9 disulfides stabilise this stretch: Cys67-Cys141, Cys70-Cys135, Cys98-Cys110, Cys198-Cys267, Cys201-Cys261, Cys225-Cys236, Cys294-Cys361, Cys297-Cys355, and Cys320-Cys330. Residues 270-376 constitute a propeptide that is removed on maturation; sequence ADAIGPALPA…PLQCFQTPHL (107 aa). An N-linked (GlcNAc...) asparagine glycan is attached at Asn306.

In terms of assembly, homodimer; disulfide-linked.

It localises to the secreted. Its subcellular location is the extracellular space. It is found in the surface film. In terms of biological role, pulmonary surfactant-associated proteins promote alveolar stability by lowering the surface tension at the air-liquid interface in the peripheral air spaces. SP-B increases the collapse pressure of palmitic acid to nearly 70 millinewtons per meter. This chain is Pulmonary surfactant-associated protein B (Sftpb), found in Rattus norvegicus (Rat).